Here is a 230-residue protein sequence, read N- to C-terminus: Lipoprotein-releasing system ATP-binding protein LolD (230 aa).

One can recognise an ABC transporter domain in the interval 6–230 (LQVQAVSKSY…GYLQVPESAQ (225 aa)). 42–49 (GTSGSGKS) contacts ATP.

Belongs to the ABC transporter superfamily. Lipoprotein translocase (TC 3.A.1.125) family. The complex is composed of two ATP-binding proteins (LolD) and two transmembrane proteins (LolC and LolE).

It is found in the cell inner membrane. In terms of biological role, part of the ABC transporter complex LolCDE involved in the translocation of mature outer membrane-directed lipoproteins, from the inner membrane to the periplasmic chaperone, LolA. Responsible for the formation of the LolA-lipoprotein complex in an ATP-dependent manner. This Shewanella oneidensis (strain ATCC 700550 / JCM 31522 / CIP 106686 / LMG 19005 / NCIMB 14063 / MR-1) protein is Lipoprotein-releasing system ATP-binding protein LolD.